Consider the following 285-residue polypeptide: Ribosomal RNA large subunit methyltransferase F (285 aa).

It belongs to the methyltransferase superfamily. METTL16/RlmF family.

Its subcellular location is the cytoplasm. The enzyme catalyses adenosine(1618) in 23S rRNA + S-adenosyl-L-methionine = N(6)-methyladenosine(1618) in 23S rRNA + S-adenosyl-L-homocysteine + H(+). Functionally, specifically methylates the adenine in position 1618 of 23S rRNA. This is Ribosomal RNA large subunit methyltransferase F from Christiangramia forsetii (strain DSM 17595 / CGMCC 1.15422 / KT0803) (Gramella forsetii).